A 307-amino-acid chain; its full sequence is Membrane protein insertase YidC 2 (307 aa).

The N-terminal stretch at 1 to 23 (MKLTLNRILFSGLALSILFTLTG) is a signal peptide. The N-palmitoyl cysteine moiety is linked to residue Cys24. A lipid anchor (S-diacylglycerol cysteine) is attached at Cys24. The next 5 membrane-spanning stretches (helical) occupy residues 58–78 (LGYG…ILPL), 135–155 (LGGI…AMYF), 179–199 (VLTA…MMAV), 209–225 (TMMY…SFSL), and 231–251 (LYWL…TYLL). Residues 263–307 (YAKNPPKAYQSTSSRKDVTPSQNMEQANLPKKIKSNRNAGKQRKR) are disordered. The segment covering 271 to 288 (YQSTSSRKDVTPSQNMEQ) has biased composition (polar residues). Basic residues predominate over residues 293–307 (KKIKSNRNAGKQRKR).

It belongs to the OXA1/ALB3/YidC family. Type 2 subfamily.

It is found in the cell membrane. Functionally, required for the insertion and/or proper folding and/or complex formation of integral membrane proteins into the membrane. Involved in integration of membrane proteins that insert both dependently and independently of the Sec translocase complex, as well as at least some lipoproteins. The chain is Membrane protein insertase YidC 2 from Streptococcus pyogenes serotype M3 (strain ATCC BAA-595 / MGAS315).